The sequence spans 261 residues: N-acetyltransferase ECO1 (261 aa).

The CCHH-type zinc-finger motif lies at 29 to 53 (LKCPKCEMKYSPNSIDDVATHKKYH). One can recognise an N-acetyltransferase domain in the interval 102–261 (VMIQENKPAE…SGHILIPCYL (160 aa)).

Belongs to the acetyltransferase family. ECO subfamily.

The protein resides in the nucleus. Probable acetyltransferase required for the establishment of sister chromatid cohesion and couple the processes of cohesion and DNA replication to ensure that only sister chromatids become paired together. In contrast to the structural cohesins, the deposition and establishment factors are required only during S phase. Acts by acetylating the cohesin complex component SMC3. This chain is N-acetyltransferase ECO1 (ECO1), found in Candida glabrata (strain ATCC 2001 / BCRC 20586 / JCM 3761 / NBRC 0622 / NRRL Y-65 / CBS 138) (Yeast).